Reading from the N-terminus, the 1123-residue chain is Mediator of RNA polymerase II transcription subunit 14 (1123 aa).

A disordered region spans residues 450–484; the sequence is KQSDASDEQQNNIEPNEESLEDLREDNNEDESEPQ.

It belongs to the Mediator complex subunit 14 family. In terms of assembly, component of the Mediator complex.

It is found in the nucleus. In terms of biological role, component of the Mediator complex, a coactivator involved in the regulated transcription of nearly all RNA polymerase II-dependent genes. Mediator functions as a bridge to convey information from gene-specific regulatory proteins to the basal RNA polymerase II transcription machinery. Mediator is recruited to promoters by direct interactions with regulatory proteins and serves as a scaffold for the assembly of a functional preinitiation complex with RNA polymerase II and the general transcription factors. The chain is Mediator of RNA polymerase II transcription subunit 14 (RGR1) from Debaryomyces hansenii (strain ATCC 36239 / CBS 767 / BCRC 21394 / JCM 1990 / NBRC 0083 / IGC 2968) (Yeast).